Here is a 375-residue protein sequence, read N- to C-terminus: GTPase HflX (375 aa).

In terms of domain architecture, Hflx-type G spans 194 to 371 (PHIAIVGYAS…RIATLLAGTK (178 aa)). Residues 200–207 (GYASAGKT), 225–229 (FTTIT), 246–249 (DTVG), 314–317 (NKID), and 349–351 (SAK) each bind GTP. Mg(2+)-binding residues include threonine 207 and threonine 227.

The protein belongs to the TRAFAC class OBG-HflX-like GTPase superfamily. HflX GTPase family. In terms of assembly, monomer. Associates with the 50S ribosomal subunit. Mg(2+) is required as a cofactor.

It localises to the cytoplasm. GTPase that associates with the 50S ribosomal subunit and may have a role during protein synthesis or ribosome biogenesis. The protein is GTPase HflX of Hyperthermus butylicus (strain DSM 5456 / JCM 9403 / PLM1-5).